Reading from the N-terminus, the 433-residue chain is MRVLVLGSGVIGTTSAYYLARAGFQVTVVDRQPAVGMETSFANAGQVSPGYASPWAAPGVPLKAIKWLLQRHSPLAIKATADIDQYLWMAQMLRNCTANRYAVNKERMVRLSEYSRDCLDELRIETGIAYEGRSLGTTQLFRTQAQLDNAAKDIAVLEQSGVPYELLDRAGIARVEPALAGVTGILSGALRLPNDQTGDCQLFTTRLAQMAVELGVEFRYGQNIERLEHAGDTVSGVWIDGVLETADRYVLALGSYSPQLLKPLGIKAPVYPLKGYSLTVPISNPAMAPTSTILDETYKVAITRFDNRIRVGGMAEIAGFDLSLNPRRRETLEMIVGDLYPQGGDLSQASFWTGLRPTTPDGTPIVGATPLRNLFLNTGHGTLGWTMACGSGRLLADLIARKRPQISAAGLDISRYGNPQENAQHVNPAPAHQ.

Position 3 to 17 (3 to 17 (VLVLGSGVIGTTSAY)) interacts with FAD.

Belongs to the DadA oxidoreductase family. The cofactor is FAD.

The enzyme catalyses a D-alpha-amino acid + A + H2O = a 2-oxocarboxylate + AH2 + NH4(+). In terms of biological role, oxidative deamination of D-amino acids. The sequence is that of D-amino acid dehydrogenase from Pseudomonas syringae pv. tomato (strain ATCC BAA-871 / DC3000).